Here is a 455-residue protein sequence, read N- to C-terminus: J protein JJJ2 (455 aa).

Residues 12-76 form the J domain; that stretch reads TYYSILGVPT…QLRAEYDKKL (65 aa). Positions 104 to 241 are disordered; the sequence is RNSKPYEQQP…RKKSEKKATP (138 aa). Positions 133–144 are enriched in low complexity; that stretch reads NSNPHNENSSNN. Positions 156-168 are enriched in basic and acidic residues; sequence TLSKDSEDKHGTD.

It localises to the cytoplasm. The protein localises to the nucleus. This chain is J protein JJJ2 (JJJ2), found in Candida glabrata (strain ATCC 2001 / BCRC 20586 / JCM 3761 / NBRC 0622 / NRRL Y-65 / CBS 138) (Yeast).